We begin with the raw amino-acid sequence, 381 residues long: Alkanesulfonate monooxygenase (381 aa).

Belongs to the SsuD family. Homotetramer.

The enzyme catalyses an alkanesulfonate + FMNH2 + O2 = an aldehyde + FMN + sulfite + H2O + 2 H(+). Catalyzes the desulfonation of aliphatic sulfonates. In Shigella flexneri serotype 5b (strain 8401), this protein is Alkanesulfonate monooxygenase.